We begin with the raw amino-acid sequence, 373 residues long: Mannan endo-1,4-beta-mannosidase A (373 aa).

A signal peptide spans 1–17 (MKGLFAFGLGLLSLVNA). Substrate-binding positions include tryptophan 81, asparagine 193, and 194-196 (EPR). Glutamate 194 (proton donor/acceptor) is an active-site residue. An intrachain disulfide couples cysteine 197 to cysteine 200. Substrate is bound by residues glutamate 230, tyrosine 267, and tryptophan 271. A disulfide bridge connects residues cysteine 289 and cysteine 296. Glutamate 300 (nucleophile) is an active-site residue. Cysteines 308 and 359 form a disulfide. Residue tryptophan 332 coordinates substrate.

Belongs to the glycosyl hydrolase 5 (cellulase A) family. Monomer. In terms of processing, not glycosylated.

The protein localises to the secreted. It carries out the reaction Random hydrolysis of (1-&gt;4)-beta-D-mannosidic linkages in mannans, galactomannans and glucomannans.. Functionally, endo-1,4-mannanase that catalyzes the random hydrolysis of (1-&gt;4)-beta-D-mannosidic linkages in mannans and heteromannans. It is a crucial enzyme for depolymerization of seed galactomannans and wood galactoglucomannans. Hydrolyzes structurally different mannan polysaccharides, such as galactomannans, glucomannans, and beta-1,4-mannans from different sources, yielding principally mannobiose. Also has transglycosylation activity. The sequence is that of Mannan endo-1,4-beta-mannosidase A from Podospora anserina (strain S / ATCC MYA-4624 / DSM 980 / FGSC 10383) (Pleurage anserina).